Consider the following 503-residue polypeptide: MATLLSPFSPSPLAKVSQIIDSTSSPSFSLFPLGRQNACSRKADHHHHHRIRTSKFGNFLELTPESVPEFLDFDLPWFHPSDRIRYDVIIIGTGPAGLRLAEQVSSRHSVKVCCVDPSPLSTWPNNYGVWVDEFEDIGLVDCLDKTWPMTCVFINDHKTKYLDRPYGRVSRNILKTKLLENCVSNGVKFHKAKVWHVNHQEFESSIVCDDGNEIKASLIVDASGFASSFVEYDKPRNHGYQIAHGILAEVESHPFDLDKMVLMDWRDSHLGNEPYLRASNLKLPTFLYAMPFDSNLVFLEETSLVSRPVLSYKEVKSRMAARLRHMGIRVKRVIEDEKCLIPMGGPLPVIPQSVMAIGGTSGLIHPATGYMVARTMALAPALADAIAECLGSTRMIRGRPLHQKVWNGLWPIDRRCNREFYSFGMETLLKLDLKGTRRFFDAFFDLNPYYWHGFLSSRLSLAELAGLSLSLFGHASNSSRLDIVTKCPVPLVKMMGNLALETI.

NAD(+) is bound at residue valine 88–proline 117.

Belongs to the lycopene cyclase family.

Its subcellular location is the plastid. It is found in the chromoplast. The enzyme catalyses all-trans-violaxanthin = all-trans-capsorubin. The catalysed reaction is all-trans-antheraxanthin = all-trans-capsanthin. Its pathway is carotenoid biosynthesis; capsanthin biosynthesis; capsanthin from antheraxanthin: step 1/1. It functions in the pathway carotenoid biosynthesis; capsorubin biosynthesis; capsorubin from violaxanthin: step 1/1. Catalyzes the conversion of the ubiquitous 5,6-epoxycarotenoids, antheraxanthin and violaxanthin, into capsanthin and capsorubin, respectively. This Citrus sinensis (Sweet orange) protein is Capsanthin/capsorubin synthase, chromoplastic (CCS).